Reading from the N-terminus, the 99-residue chain is Essential MCU regulator, mitochondrial (99 aa).

A mitochondrion-targeting transit peptide spans 1–39 (MAARVGVLSVAGFRAAARAGGLLRASKQSSAVSHVPCRT). The Mitochondrial matrix portion of the chain corresponds to 40-57 (AIATSAGTVLPKPEKVSF). The helical transmembrane segment at 58-77 (GLLRVFTVVIPFLYIGTLIS) threads the bilayer. Residues 78–99 (KNFAALLEEHDIFVPEDDDDDD) lie on the Mitochondrial intermembrane side of the membrane.

This sequence belongs to the SMDT1/EMRE family. In terms of assembly, component of the uniplex complex.

Its subcellular location is the mitochondrion inner membrane. Its function is as follows. Essential regulatory subunit of the mitochondrial calcium uniporter complex (uniplex), a complex that mediates calcium uptake into mitochondria. Required to bridge the calcium-sensing proteins micu1 with the calcium-conducting subunit mcu. Acts by mediating activation of mcu and retention of micu1 to the mcu pore, in order to ensure tight regulation of the uniplex complex and appropriate responses to intracellular calcium signaling. This Xenopus tropicalis (Western clawed frog) protein is Essential MCU regulator, mitochondrial.